The sequence spans 414 residues: Probable isoprenylcysteine alpha-carbonyl methylesterase ICME (414 aa).

The tract at residues 1–54 (MQPASPVSGDAGPVAEAVPPRGAPQVLVRRRSVPFSPDSPLAPGSRGGGERRST) is disordered. A run of 2 helical transmembrane segments spans residues 90 to 110 (LAALIIYAILLMPGFIRVGYY) and 145 to 165 (VVAFVTGGAWIIGYKAWGALL). Substrate contacts are provided by residues 151-153 (GGA) and 222-224 (QSA). Residues serine 223, aspartate 323, and histidine 355 contribute to the active site.

The protein belongs to the AB hydrolase superfamily. Isoprenylcysteine methylesterase family.

The protein localises to the endoplasmic reticulum membrane. Its subcellular location is the golgi apparatus membrane. It carries out the reaction [protein]-C-terminal S-[(2E,6E)-farnesyl]-L-cysteine methyl ester + H2O = [protein]-C-terminal S-[(2E,6E)-farnesyl]-L-cysteine + methanol + H(+). In terms of biological role, catalyzes the demethylation of isoprenylcysteine methylesters. In Oryza sativa subsp. japonica (Rice), this protein is Probable isoprenylcysteine alpha-carbonyl methylesterase ICME (IMCE).